The chain runs to 160 residues: Cytochrome b6-f complex subunit 4 (160 aa).

A run of 3 helical transmembrane segments spans residues 36–56 (LLYM…SLAV), 95–115 (LIGI…PFIE), and 131–151 (AVFL…TLPI).

The protein belongs to the cytochrome b family. PetD subfamily. The 4 large subunits of the cytochrome b6-f complex are cytochrome b6, subunit IV (17 kDa polypeptide, petD), cytochrome f and the Rieske protein, while the 4 small subunits are petG, petL, petM and petN. The complex functions as a dimer.

The protein resides in the plastid. Its subcellular location is the chloroplast thylakoid membrane. Component of the cytochrome b6-f complex, which mediates electron transfer between photosystem II (PSII) and photosystem I (PSI), cyclic electron flow around PSI, and state transitions. This chain is Cytochrome b6-f complex subunit 4, found in Bigelowiella natans (Pedinomonas minutissima).